The primary structure comprises 944 residues: 2-oxoglutarate dehydrogenase E1 component (944 aa).

The tract at residues Arg915–Asn944 is disordered. The span at Pro925–Val936 shows a compositional bias: basic and acidic residues.

This sequence belongs to the alpha-ketoglutarate dehydrogenase family. As to quaternary structure, homodimer. Part of the 2-oxoglutarate dehydrogenase (OGDH) complex composed of E1 (2-oxoglutarate dehydrogenase), E2 (dihydrolipoamide succinyltransferase) and E3 (dihydrolipoamide dehydrogenase); the complex contains multiple copies of the three enzymatic components (E1, E2 and E3). The cofactor is thiamine diphosphate.

It catalyses the reaction N(6)-[(R)-lipoyl]-L-lysyl-[protein] + 2-oxoglutarate + H(+) = N(6)-[(R)-S(8)-succinyldihydrolipoyl]-L-lysyl-[protein] + CO2. In terms of biological role, E1 component of the 2-oxoglutarate dehydrogenase (OGDH) complex which catalyzes the decarboxylation of 2-oxoglutarate, the first step in the conversion of 2-oxoglutarate to succinyl-CoA and CO(2). This chain is 2-oxoglutarate dehydrogenase E1 component, found in Bacillus velezensis (strain DSM 23117 / BGSC 10A6 / LMG 26770 / FZB42) (Bacillus amyloliquefaciens subsp. plantarum).